The sequence spans 502 residues: MLVTAGSLLGAIWTVLHLRILLLAAVTFLFLADFLKHRRPKNYPPGPWRLPLVGCLFHLDPKQPHLSLQQFVKKYGNVLSLDFANIPSVVVTGMPLIKEIFTQMEHNFLNRPVTLLRKHLFNKNGLIFSSGQTWKEQRRFALMTLRNFGLGKKSLEQRIQEEAYHLVEAIKDEGGLPFDPHFNINKAVSNIICSVTFGERFEYHDSQFQEMLRLLDEAMCLESSMMCQLYNIFPRILQYLPGSHQTLFSNWRKLKLFISDIIKNHRRDWDPDEPRDFIDAFLKEMAKYPDKTTTSFNEENLICSTLDLFFAGTETTSTTLRWALLCMALYPEVQEKMQAEIDRVIGQGRQPNLADRDSMPYTNAVIHEVQRIGNIIPFNVPREVAVDTYLAGFNLPKGTMILTNLTALHRDPKEWATPDTFNPEHFLENGQFKKRESFLPFSMGKRACLGEQLARSELFIFITSLIQKFTFKPPVNEKLSLQFRMSVTISPVSHRLCAIPRL.

Cysteine 448 is a heme binding site.

Belongs to the cytochrome P450 family. Heme is required as a cofactor. As to expression, abundantly expressed in heart and liver.

The protein localises to the endoplasmic reticulum membrane. It is found in the microsome membrane. It catalyses the reaction an organic molecule + reduced [NADPH--hemoprotein reductase] + O2 = an alcohol + oxidized [NADPH--hemoprotein reductase] + H2O + H(+). Its function is as follows. This enzyme metabolizes arachidonic acid predominantly via a NADPH-dependent olefin epoxidation mainly to 14,15-, 11,12-, and 8,9-epoxyeicosatrienoic acids (EET). It also acts as an omega-1-hydroxylase by metabolizing arachidonic acid to 19-hydroxyeicosatetraenoic acid (19-OH-AA). In Rattus norvegicus (Rat), this protein is Cytochrome P450 2J3 (Cyp2j3).